Here is a 271-residue protein sequence, read N- to C-terminus: Formamidopyrimidine-DNA glycosylase (271 aa).

Pro2 serves as the catalytic Schiff-base intermediate with DNA. The active-site Proton donor is the Glu3. Lys58 acts as the Proton donor; for beta-elimination activity in catalysis. Positions 91, 110, and 152 each coordinate DNA. The segment at 237-271 adopts an FPG-type zinc-finger fold; sequence SIYGKKGRPCPKCGSAIRMMRLGGRSTFFCPLCQK. The active-site Proton donor; for delta-elimination activity is Arg261.

The protein belongs to the FPG family. In terms of assembly, monomer. The cofactor is Zn(2+).

The enzyme catalyses Hydrolysis of DNA containing ring-opened 7-methylguanine residues, releasing 2,6-diamino-4-hydroxy-5-(N-methyl)formamidopyrimidine.. It carries out the reaction 2'-deoxyribonucleotide-(2'-deoxyribose 5'-phosphate)-2'-deoxyribonucleotide-DNA = a 3'-end 2'-deoxyribonucleotide-(2,3-dehydro-2,3-deoxyribose 5'-phosphate)-DNA + a 5'-end 5'-phospho-2'-deoxyribonucleoside-DNA + H(+). In terms of biological role, involved in base excision repair of DNA damaged by oxidation or by mutagenic agents. Acts as a DNA glycosylase that recognizes and removes damaged bases. Has a preference for oxidized purines, such as 7,8-dihydro-8-oxoguanine (8-oxoG). Has AP (apurinic/apyrimidinic) lyase activity and introduces nicks in the DNA strand. Cleaves the DNA backbone by beta-delta elimination to generate a single-strand break at the site of the removed base with both 3'- and 5'-phosphates. The polypeptide is Formamidopyrimidine-DNA glycosylase (Geotalea daltonii (strain DSM 22248 / JCM 15807 / FRC-32) (Geobacter daltonii)).